Consider the following 71-residue polypeptide: Translation initiation factor IF-1 (71 aa).

The S1-like domain occupies 1 to 71; it reads MAKQAAIEQD…LTKARITYRY (71 aa).

The protein belongs to the IF-1 family. Component of the 30S ribosomal translation pre-initiation complex which assembles on the 30S ribosome in the order IF-2 and IF-3, IF-1 and N-formylmethionyl-tRNA(fMet); mRNA recruitment can occur at any time during PIC assembly.

It localises to the cytoplasm. Functionally, one of the essential components for the initiation of protein synthesis. Stabilizes the binding of IF-2 and IF-3 on the 30S subunit to which N-formylmethionyl-tRNA(fMet) subsequently binds. Helps modulate mRNA selection, yielding the 30S pre-initiation complex (PIC). Upon addition of the 50S ribosomal subunit IF-1, IF-2 and IF-3 are released leaving the mature 70S translation initiation complex. The sequence is that of Translation initiation factor IF-1 from Christiangramia forsetii (strain DSM 17595 / CGMCC 1.15422 / KT0803) (Gramella forsetii).